A 2209-amino-acid chain; its full sequence is Genome polyprotein (2209 aa).

Glycine 2 carries N-myristoyl glycine; by host lipidation. Over glycine 2–glutamine 1520 the chain is Cytoplasmic. The tract at residues glycine 580–alanine 600 is amphipathic alpha-helix. Residues alanine 599–glutamate 619 form a disordered region. Residues histidine 901 and aspartate 919 each act as for protease 2A activity in the active site. Residues cysteine 936 and cysteine 938 each contribute to the Zn(2+) site. Catalysis depends on cysteine 990, which acts as the For protease 2A activity. Zn(2+) contacts are provided by cysteine 996 and histidine 998. The tract at residues glycine 1128–glutamine 1200 is membrane-binding. Residues glycine 1128 to threonine 1266 are oligomerization. Residues serine 1149–serine 1153 form an RNA-binding region. One can recognise an SF3 helicase domain in the interval glutamate 1232–asparagine 1388. Position 1256–1263 (glycine 1256–serine 1263) interacts with ATP. Residues cysteine 1396, cysteine 1399, cysteine 1408, and cysteine 1413 each contribute to the Zn(2+) site. The C4-type zinc finger occupies cysteine 1396–cysteine 1413. The RNA-binding stretch occupies residues glutamate 1440 to isoleucine 1447. The oligomerization stretch occupies residues methionine 1451–glutamine 1456. The stretch at alanine 1521–tyrosine 1536 is an intramembrane region. The Cytoplasmic segment spans residues lysine 1537–phenylalanine 2209. An O-(5'-phospho-RNA)-tyrosine modification is found at tyrosine 1546. Position 1546 is an O-UMP-tyrosine; transient (tyrosine 1546). Residues glycine 1566–phenylalanine 1744 enclose the Peptidase C3 domain. Active-site for protease 3C activity residues include histidine 1605, glutamate 1636, and cysteine 1712. The 116-residue stretch at glutamate 1975–leucine 2090 folds into the RdRp catalytic domain. Residues aspartate 1981 and aspartate 2076 each coordinate Mg(2+).

It belongs to the picornaviruses polyprotein family. Interacts with capsid protein VP1 and capsid protein VP3 to form heterotrimeric protomers. As to quaternary structure, interacts with capsid protein VP0, and capsid protein VP3 to form heterotrimeric protomers. Five protomers subsequently associate to form pentamers which serve as building blocks for the capsid. Interacts with capsid protein VP2, capsid protein VP3 and capsid protein VP4 following cleavage of capsid protein VP0. Interacts with human PVR. In terms of assembly, interacts with capsid protein VP1 and capsid protein VP3 in the mature capsid. Interacts with capsid protein VP0 and capsid protein VP1 to form heterotrimeric protomers. Five protomers subsequently associate to form pentamers which serve as building blocks for the capsid. Interacts with capsid protein VP4 in the mature capsid. Interacts with protein 2C; this interaction may be important for virion morphogenesis. As to quaternary structure, interacts with capsid protein VP1 and capsid protein VP3. In terms of assembly, homodimer. Homohexamer; forms a hexameric ring structure with 6-fold symmetry characteristic of AAA+ ATPases. Interacts (via N-terminus) with host RTN3 (via reticulon domain); this interaction is important for viral replication. Interacts with capsid protein VP3; this interaction may be important for virion morphogenesis. As to quaternary structure, interacts with protein 3CD. In terms of assembly, homodimer. Interacts with host GBF1. Interacts (via GOLD domain) with host ACBD3 (via GOLD domain); this interaction allows the formation of a viral protein 3A/ACBD3 heterotetramer with a 2:2 stoichiometry, which will stimulate the recruitment of host PI4KB in order to synthesize PI4P at the viral RNA replication sites. Interacts with RNA-directed RNA polymerase. As to quaternary structure, interacts with protein 3AB and with RNA-directed RNA polymerase. In terms of assembly, interacts with Viral protein genome-linked and with protein 3CD. It depends on Mg(2+) as a cofactor. Specific enzymatic cleavages in vivo by the viral proteases yield processing intermediates and the mature proteins. Post-translationally, myristoylation is required for the formation of pentamers during virus assembly. Further assembly of 12 pentamers and a molecule of genomic RNA generates the provirion. In terms of processing, during virion maturation, immature virions are rendered infectious following cleavage of VP0 into VP4 and VP2. This maturation seems to be an autocatalytic event triggered by the presence of RNA in the capsid and it is followed by a conformational change infectious virion. Myristoylation is required during RNA encapsidation and formation of the mature virus particle. Post-translationally, VPg is uridylylated by the polymerase into VPg-pUpU. This acts as a nucleotide-peptide primer for the genomic RNA replication.

The protein localises to the virion. It localises to the host cytoplasm. Its subcellular location is the host cytoplasmic vesicle membrane. It is found in the host nucleus. The enzyme catalyses RNA(n) + a ribonucleoside 5'-triphosphate = RNA(n+1) + diphosphate. It catalyses the reaction Selective cleavage of Tyr-|-Gly bond in the picornavirus polyprotein.. The catalysed reaction is a ribonucleoside 5'-triphosphate + H2O = a ribonucleoside 5'-diphosphate + phosphate + H(+). It carries out the reaction Selective cleavage of Gln-|-Gly bond in the poliovirus polyprotein. In other picornavirus reactions Glu may be substituted for Gln, and Ser or Thr for Gly.. Replication or transcription is subject to high level of random mutations by the nucleotide analog ribavirin. Functionally, forms an icosahedral capsid of pseudo T=3 symmetry with capsid proteins VP2 and VP3. The capsid is 300 Angstroms in diameter, composed of 60 copies of each capsid protein and enclosing the viral positive strand RNA genome. Capsid protein VP1 mainly forms the vertices of the capsid. Capsid protein VP1 interacts with host cell receptor PVR to provide virion attachment to target host epithelial cells. This attachment induces virion internalization predominantly through clathrin- and caveolin-independent endocytosis in Hela cells and through caveolin-mediated endocytosis in brain microvascular endothelial cells. Tyrosine kinases are probably involved in the entry process. Virus binding to PVR induces increased junctional permeability and rearrangement of junctional proteins. Modulation of endothelial tight junctions, as well as cytolytic infection of endothelial cells themselves, may result in loss of endothelial integrity which may help the virus to reach the CNS. After binding to its receptor, the capsid undergoes conformational changes. Capsid protein VP1 N-terminus (that contains an amphipathic alpha-helix) and capsid protein VP4 are externalized. Together, they shape a pore in the host membrane through which viral genome is translocated to host cell cytoplasm. Forms an icosahedral capsid of pseudo T=3 symmetry with capsid proteins VP1 and VP3. The capsid is 300 Angstroms in diameter, composed of 60 copies of each capsid protein and enclosing the viral positive strand RNA genome. In terms of biological role, forms an icosahedral capsid of pseudo T=3 symmetry with capsid proteins VP2 and VP1. The capsid is 300 Angstroms in diameter, composed of 60 copies of each capsid protein and enclosing the viral positive strand RNA genome. Its function is as follows. Lies on the inner surface of the capsid shell. After binding to the host receptor, the capsid undergoes conformational changes. Capsid protein VP4 is released, Capsid protein VP1 N-terminus is externalized, and together, they shape a pore in the host membrane through which the viral genome is translocated into the host cell cytoplasm. Functionally, component of immature procapsids, which is cleaved into capsid proteins VP4 and VP2 after maturation. Allows the capsid to remain inactive before the maturation step. Cysteine protease that cleaves viral polyprotein and specific host proteins. It is responsible for the autocatalytic cleavage between the P1 and P2 regions, which is the first cleavage occurring in the polyprotein. Also cleaves the host translation initiation factor EIF4G1, in order to shut down the capped cellular mRNA translation. Inhibits the host nucleus-cytoplasm protein and RNA trafficking by cleaving host members of the nuclear pores including NUP98, NUP62 and NUP153. Counteracts stress granule formation probably by antagonizing its assembly or promoting its dissassembly. Cleaves and inhibits host IFIH1/MDA5, thereby inhibiting the type-I IFN production and the establishment of the antiviral state. Cleaves and inhibits host MAVS, thereby inhibiting the type-I IFN production and the establishment of the antiviral state. In terms of biological role, plays an essential role in the virus replication cycle by acting as a viroporin. Creates a pore in the host endoplasmic reticulum and as a consequence releases Ca2+ in the cytoplasm of infected cell. In turn, high levels of cytoplasmic calcium may trigger membrane trafficking and transport of viral ER-associated proteins to viroplasms, sites of viral genome replication. Its function is as follows. Induces and associates with structural rearrangements of intracellular membranes. Displays RNA-binding, nucleotide binding and NTPase activities. May play a role in virion morphogenesis and viral RNA encapsidation by interacting with the capsid protein VP3. Functionally, localizes the viral replication complex to the surface of membranous vesicles. Together with protein 3CD binds the Cis-Active RNA Element (CRE) which is involved in RNA synthesis initiation. Acts as a cofactor to stimulate the activity of 3D polymerase, maybe through a nucleid acid chaperone activity. Localizes the viral replication complex to the surface of membranous vesicles. It inhibits host cell endoplasmic reticulum-to-Golgi apparatus transport and causes the disassembly of the Golgi complex, possibly through GBF1 interaction. This would result in depletion of MHC, trail receptors and IFN receptors at the host cell surface. Plays an essential role in viral RNA replication by recruiting ACBD3 and PI4KB at the viral replication sites, thereby allowing the formation of the rearranged membranous structures where viral replication takes place. In terms of biological role, acts as a primer for viral RNA replication and remains covalently bound to viral genomic RNA. VPg is uridylylated prior to priming replication into VPg-pUpU. The oriI viral genomic sequence may act as a template for this. The VPg-pUpU is then used as primer on the genomic RNA poly(A) by the RNA-dependent RNA polymerase to replicate the viral genome. During genome replication, the VPg-RNA linkage is removed by the host TDP2, thereby accelerating replication. During the late stage of the replication cycle, host TDP2 is excluded from sites of viral RNA synthesis and encapsidation, allowing for the generation of progeny virions. Its function is as follows. Involved in the viral replication complex and viral polypeptide maturation. It exhibits protease activity with a specificity and catalytic efficiency that is different from protease 3C. Protein 3CD binds to the 5'UTR of the viral genome. Functionally, major viral protease that mediates proteolytic processing of the polyprotein. Cleaves host EIF5B, contributing to host translation shutoff. Cleaves also host PABPC1, contributing to host translation shutoff. Cleaves host RIGI and thus contributes to the inhibition of type I interferon production. Cleaves host NLRP1, triggers host N-glycine-mediated degradation of the autoinhibitory NLRP1 N-terminal fragment. Inhibits the integrated stress response (ISR) in the infected cell by cleaving host G3BP1. Stress granule formation is thus inhibited, which allows protein synthesis and viral replication. Replicates the viral genomic RNA on the surface of intracellular membranes. May form linear arrays of subunits that propagate along a strong head-to-tail interaction called interface-I. Covalently attaches UMP to a tyrosine of VPg, which is used to prime RNA synthesis. The positive stranded RNA genome is first replicated at virus induced membranous vesicles, creating a dsRNA genomic replication form. This dsRNA is then used as template to synthesize positive stranded RNA genomes. ss(+)RNA genomes are either translated, replicated or encapsidated. This chain is Genome polyprotein, found in Homo sapiens (Human).